A 187-amino-acid chain; its full sequence is Large ribosomal subunit protein uL5 (187 aa).

The protein belongs to the universal ribosomal protein uL5 family. In terms of assembly, part of the 50S ribosomal subunit; part of the 5S rRNA/L5/L18/L25 subcomplex. Contacts the 5S rRNA and the P site tRNA. Forms a bridge to the 30S subunit in the 70S ribosome.

Functionally, this is one of the proteins that bind and probably mediate the attachment of the 5S RNA into the large ribosomal subunit, where it forms part of the central protuberance. In the 70S ribosome it contacts protein S13 of the 30S subunit (bridge B1b), connecting the 2 subunits; this bridge is implicated in subunit movement. Contacts the P site tRNA; the 5S rRNA and some of its associated proteins might help stabilize positioning of ribosome-bound tRNAs. This is Large ribosomal subunit protein uL5 from Ruegeria sp. (strain TM1040) (Silicibacter sp.).